The primary structure comprises 481 residues: Protein nucleotidyltransferase YdiU (481 aa).

Residues glycine 85, glycine 87, arginine 88, lysine 108, aspartate 120, glycine 121, arginine 172, and arginine 179 each contribute to the ATP site. The Proton acceptor role is filled by aspartate 248. 2 residues coordinate Mg(2+): asparagine 249 and aspartate 258. ATP is bound at residue aspartate 258.

It belongs to the SELO family. Mg(2+) is required as a cofactor. It depends on Mn(2+) as a cofactor.

The catalysed reaction is L-seryl-[protein] + ATP = 3-O-(5'-adenylyl)-L-seryl-[protein] + diphosphate. It catalyses the reaction L-threonyl-[protein] + ATP = 3-O-(5'-adenylyl)-L-threonyl-[protein] + diphosphate. The enzyme catalyses L-tyrosyl-[protein] + ATP = O-(5'-adenylyl)-L-tyrosyl-[protein] + diphosphate. It carries out the reaction L-histidyl-[protein] + UTP = N(tele)-(5'-uridylyl)-L-histidyl-[protein] + diphosphate. The catalysed reaction is L-seryl-[protein] + UTP = O-(5'-uridylyl)-L-seryl-[protein] + diphosphate. It catalyses the reaction L-tyrosyl-[protein] + UTP = O-(5'-uridylyl)-L-tyrosyl-[protein] + diphosphate. Its function is as follows. Nucleotidyltransferase involved in the post-translational modification of proteins. It can catalyze the addition of adenosine monophosphate (AMP) or uridine monophosphate (UMP) to a protein, resulting in modifications known as AMPylation and UMPylation. This is Protein nucleotidyltransferase YdiU from Cereibacter sphaeroides (strain KD131 / KCTC 12085) (Rhodobacter sphaeroides).